Here is a 345-residue protein sequence, read N- to C-terminus: Linoleate 10R-lipoxygenase COP4 (345 aa).

Mg(2+) is bound by residues aspartate 87, aspartate 91, asparagine 222, serine 226, and glutamate 230. The short motif at 87 to 91 (DEISD) is the DDXXD motif element.

The protein belongs to the terpene synthase family. Requires Mg(2+) as cofactor.

It catalyses the reaction (2E,6E)-farnesyl diphosphate + H2O = cubebol + diphosphate. It carries out the reaction (2E,6E)-farnesyl diphosphate = beta-copaene + diphosphate. The catalysed reaction is (2E,6E)-farnesyl diphosphate = beta-cubebene + diphosphate. The enzyme catalyses (2E,6E)-farnesyl diphosphate = (+)-sativene + diphosphate. Sesquiterpene synthase that catalyzes the cyclization of farnesyl diphosphate (FPP) into multiple products, including germacrene D, beta-copaene, beta-cubebene, (+)-sativene and cubebol, a natural sesquiterpene alcohol used in the food industry for its cooling and refreshing taste. Terpenoid hydrocarbons resulting from cyclization of farnesyl diphosphate are intermediates in the biosynthesis of biologically active compounds such as antibiotics, toxins and pheromones. In Coprinopsis cinerea (strain Okayama-7 / 130 / ATCC MYA-4618 / FGSC 9003) (Inky cap fungus), this protein is Linoleate 10R-lipoxygenase COP4 (COP4).